A 134-amino-acid chain; its full sequence is Small ribosomal subunit protein uS11 (134 aa).

Residues 1–22 are disordered; it reads MAQKTRATAARKPRRKVNKNVT. Residues 9 to 18 show a composition bias toward basic residues; that stretch reads AARKPRRKVN.

The protein belongs to the universal ribosomal protein uS11 family. Part of the 30S ribosomal subunit. Interacts with proteins S7 and S18. Binds to IF-3.

Located on the platform of the 30S subunit, it bridges several disparate RNA helices of the 16S rRNA. Forms part of the Shine-Dalgarno cleft in the 70S ribosome. The chain is Small ribosomal subunit protein uS11 from Kocuria rhizophila (strain ATCC 9341 / DSM 348 / NBRC 103217 / DC2201).